The sequence spans 205 residues: Tumor suppressor candidate gene 1 protein homolog (205 aa).

Low complexity predominate over residues 1-12 (MWRMRGGATRRG). Residues 1-49 (MWRMRGGATRRGSCGGEGGGSRGESGRLGRAREGGGGGGGVGWRGRAGG) form a disordered region. The segment covering 13–23 (SCGGEGGGSRG) has biased composition (gly residues). The span at 24 to 33 (ESGRLGRARE) shows a compositional bias: basic and acidic residues. The segment covering 34-48 (GGGGGGGVGWRGRAG) has biased composition (gly residues). Residues 66–110 (LEALRARDERDRQNARLREENARLRLENRRLRRENRSLFRQALRL) adopt a coiled-coil conformation. 2 disordered regions span residues 113–149 (DSGE…SPRA) and 174–205 (GARP…RPWL). Phosphoserine is present on Ser-146. Residues 196-205 (HDPDVPRPWL) are compositionally biased toward basic and acidic residues.

In Mus musculus (Mouse), this protein is Tumor suppressor candidate gene 1 protein homolog (Tusc1).